The primary structure comprises 336 residues: NADH-cytochrome b5 reductase 2 (336 aa).

The helical transmembrane segment at 28 to 50 (GGSSNGALYVGIGAAGLAGAYIY) threads the bilayer. The 106-residue stretch at 84 to 189 (QGFISLLLDK…KGPIPKYPWS (106 aa)) folds into the FAD-binding FR-type domain. 192–227 (KHEHIALIAGGTGITPMWQTARAIFKNPEDKTKVTL) lines the FAD pocket.

This sequence belongs to the flavoprotein pyridine nucleotide cytochrome reductase family. FAD serves as cofactor.

Its subcellular location is the mitochondrion outer membrane. The catalysed reaction is 2 Fe(III)-[cytochrome b5] + NADH = 2 Fe(II)-[cytochrome b5] + NAD(+) + H(+). Functionally, may mediate the reduction of outer membrane cytochrome b5. The protein is NADH-cytochrome b5 reductase 2 (MCR1) of Phaeosphaeria nodorum (strain SN15 / ATCC MYA-4574 / FGSC 10173) (Glume blotch fungus).